A 200-amino-acid chain; its full sequence is Exopolysaccharide production protein PSS (200 aa).

This sequence belongs to the bacterial sugar transferase family.

This chain is Exopolysaccharide production protein PSS (pss), found in Rhizobium leguminosarum bv. phaseoli.